Here is a 108-residue protein sequence, read N- to C-terminus: UPF0060 membrane protein DSY4157 (108 aa).

4 helical membrane passes run 6 to 26 (ILFILAGLAEIGGGYLVWLWL), 31 to 51 (PYWYGVIGAIILVFYGIIPTL), 60 to 80 (VYAAYGGVFIILAVLWGWGVD), and 86 to 106 (TYDWIGAAICLVGVTVMLWAP).

This sequence belongs to the UPF0060 family.

The protein localises to the cell membrane. This is UPF0060 membrane protein DSY4157 from Desulfitobacterium hafniense (strain Y51).